The primary structure comprises 592 residues: Sodium- and chloride-dependent transporter XTRP3 (592 aa).

Topologically, residues 1 to 5 (MEKAR) are cytoplasmic. The chain crosses the membrane as a helical span at residues 6–26 (PLWANSLQFVFACISYAVGLG). Residues 27–42 (NVWRFPYLCQMYGGGS) are Extracellular-facing. A helical membrane pass occupies residues 43-63 (FLVPYIIMLIVEGMPLLYLEL). At 64–79 (AVGQRMRQGSIGAWRT) the chain is on the cytoplasmic side. The chain crosses the membrane as a helical span at residues 80–100 (ISPYLSGVGVASVVVSFFLSM). At 101 to 165 (YYNVINAWAF…ISPSLQENGG (65 aa)) the chain is on the extracellular side. The N-linked (GlcNAc...) asparagine glycan is linked to Asn-131. A helical transmembrane segment spans residues 166-186 (VQWEPALCLLLAWLVVYLCIL). The Cytoplasmic portion of the chain corresponds to 187–194 (RGTESTGK). The chain crosses the membrane as a helical span at residues 195 to 215 (VVYFTASLPYCVLIIYLIRGL). At 216–241 (TLHGATNGLMYMFTPKIEQLANPKAW) the chain is on the extracellular side. Residues 242–262 (INAATQIFFSLGLGFGSLIAF) form a helical membrane-spanning segment. The Cytoplasmic segment spans residues 263 to 276 (ASYNEPSNNCQKHA). A helical membrane pass occupies residues 277–297 (IIVSLINSFTSIFASIVTFSI). At 298 to 389 (YGFKATFNYE…EAIKNMEVSQ (92 aa)) the chain is on the extracellular side. Asn-357 carries N-linked (GlcNAc...) asparagine glycosylation. The chain crosses the membrane as a helical span at residues 390-410 (LWSVLYFFMLLMLGIGSMLGN). Residues 411 to 431 (TAAILTPLTDSKIISSHLPKE) lie on the Cytoplasmic side of the membrane. Residues 432–452 (AISGLVCLVNCAIGMVFTMEA) traverse the membrane as a helical segment. Residues 453 to 465 (GNYWFDIFNDYAA) lie on the Extracellular side of the membrane. The helical transmembrane segment at 466 to 486 (TLSLLLIVLVETIAVCYVYGL) threads the bilayer. Over 487–504 (RRFESDLKAMTGRAVSWY) the chain is Cytoplasmic. Residues 505 to 525 (WKVMWAGVSPLLIVSLFVFYL) traverse the membrane as a helical segment. The Extracellular portion of the chain corresponds to 526 to 554 (SDYILTGTLKYQAWDASQGQLVTKDYPAY). A helical transmembrane segment spans residues 555–575 (ALAVIGLLVASSTMCIPLAAL). The Cytoplasmic portion of the chain corresponds to 576 to 592 (GTFVQRRLKRGDADPVA).

The protein belongs to the sodium:neurotransmitter symporter (SNF) (TC 2.A.22) family. SLC6A20 subfamily. Kidney and small intestine. Expressed in the S3 segment of the proximal tubule. Expressed in neurons.

It is found in the apical cell membrane. The catalysed reaction is L-proline(out) + chloride(out) + 2 Na(+)(out) = L-proline(in) + chloride(in) + 2 Na(+)(in). It catalyses the reaction L-pipecolate(out) + chloride(out) + 2 Na(+)(out) = L-pipecolate(in) + chloride(in) + 2 Na(+)(in). The enzyme catalyses sarcosine(out) + chloride(out) + 2 Na(+)(out) = sarcosine(in) + chloride(in) + 2 Na(+)(in). It carries out the reaction N-methyl-L-proline(out) + chloride(out) + 2 Na(+)(out) = N-methyl-L-proline(in) + chloride(in) + 2 Na(+)(in). The catalysed reaction is 2-methyl-2-(methylamino)propanoate(out) + chloride(out) + 2 Na(+)(out) = 2-methyl-2-(methylamino)propanoate(in) + chloride(in) + 2 Na(+)(in). It catalyses the reaction glycine betaine(out) + chloride(out) + 2 Na(+)(out) = glycine betaine(in) + chloride(in) + 2 Na(+)(in). The enzyme catalyses glycine(out) + chloride(out) + 2 Na(+)(out) = glycine(in) + chloride(in) + 2 Na(+)(in). Mediates the Na(+)- and Cl(-)-dependent uptake of imino acids such as L-proline, N-methyl-L-proline and pipecolate as well as N-methylated amino acids. Also transports glycine, regulates proline and glycine homeostasis in the brain playing a role in the modulation of NMDAR currents. This is Sodium- and chloride-dependent transporter XTRP3 from Homo sapiens (Human).